The following is a 338-amino-acid chain: Ketol-acid reductoisomerase (NADP(+)) (338 aa).

Positions 1–181 (MNVFYDKDAD…GGGRAGIIET (181 aa)) constitute a KARI N-terminal Rossmann domain. NADP(+) contacts are provided by residues 24–27 (YGSQ), Arg47, and Ser52. The active site involves His107. An NADP(+)-binding site is contributed by Gly133. A KARI C-terminal knotted domain is found at 182-327 (NFREETETDL…AKLRAMMPWI (146 aa)). Mg(2+)-binding residues include Asp190, Glu194, Glu226, and Glu230. Ser251 contacts substrate.

It belongs to the ketol-acid reductoisomerase family. Mg(2+) serves as cofactor.

The catalysed reaction is (2R)-2,3-dihydroxy-3-methylbutanoate + NADP(+) = (2S)-2-acetolactate + NADPH + H(+). It carries out the reaction (2R,3R)-2,3-dihydroxy-3-methylpentanoate + NADP(+) = (S)-2-ethyl-2-hydroxy-3-oxobutanoate + NADPH + H(+). It functions in the pathway amino-acid biosynthesis; L-isoleucine biosynthesis; L-isoleucine from 2-oxobutanoate: step 2/4. It participates in amino-acid biosynthesis; L-valine biosynthesis; L-valine from pyruvate: step 2/4. Functionally, involved in the biosynthesis of branched-chain amino acids (BCAA). Catalyzes an alkyl-migration followed by a ketol-acid reduction of (S)-2-acetolactate (S2AL) to yield (R)-2,3-dihydroxy-isovalerate. In the isomerase reaction, S2AL is rearranged via a Mg-dependent methyl migration to produce 3-hydroxy-3-methyl-2-ketobutyrate (HMKB). In the reductase reaction, this 2-ketoacid undergoes a metal-dependent reduction by NADPH to yield (R)-2,3-dihydroxy-isovalerate. This chain is Ketol-acid reductoisomerase (NADP(+)), found in Burkholderia multivorans (strain ATCC 17616 / 249).